Consider the following 275-residue polypeptide: Large ribosomal subunit protein uL2cz (275 aa).

2 disordered regions span residues 1-22 (MAIH…DSQV) and 226-275 (NPVD…RRRK).

Belongs to the universal ribosomal protein uL2 family. Part of the 50S ribosomal subunit.

It localises to the plastid. The protein resides in the chloroplast. The protein is Large ribosomal subunit protein uL2cz (rpl2-A) of Chloranthus spicatus (Chulantree).